Reading from the N-terminus, the 245-residue chain is MIIPALDLIDGTVVRLHQGDYARQRDYGNDPLPRLQDYAAQGAGVLHLVDLTGAKDPAKRQIPLIKTLVAGVNVPVQVGGGVRTEEDVAALLKAGVARVVIGSTAVKSPDVVKGWFERFGAQALVLALDVRIDEHGNKQVAVSGWQENSGVSLEQLVETYLPVGLKHVLCTDISRDGTLAGSNVSLYEEICARYPQIAFQSSGGIGDIDDIAALRGTGVRGVIVGRALLEGKFTVKEAIQCWQNV.

The active-site Proton acceptor is the D7. Residue D129 is the Proton donor of the active site.

Belongs to the HisA/HisF family.

Its subcellular location is the cytoplasm. The enzyme catalyses 1-(5-phospho-beta-D-ribosyl)-5-[(5-phospho-beta-D-ribosylamino)methylideneamino]imidazole-4-carboxamide = 5-[(5-phospho-1-deoxy-D-ribulos-1-ylimino)methylamino]-1-(5-phospho-beta-D-ribosyl)imidazole-4-carboxamide. The protein operates within amino-acid biosynthesis; L-histidine biosynthesis; L-histidine from 5-phospho-alpha-D-ribose 1-diphosphate: step 4/9. The sequence is that of 1-(5-phosphoribosyl)-5-[(5-phosphoribosylamino)methylideneamino] imidazole-4-carboxamide isomerase from Salmonella enteritidis PT4 (strain P125109).